Reading from the N-terminus, the 332-residue chain is Ribosomal RNA small subunit methyltransferase C (332 aa).

It belongs to the methyltransferase superfamily. RsmC family. As to quaternary structure, monomer.

It localises to the cytoplasm. The enzyme catalyses guanosine(1207) in 16S rRNA + S-adenosyl-L-methionine = N(2)-methylguanosine(1207) in 16S rRNA + S-adenosyl-L-homocysteine + H(+). In terms of biological role, specifically methylates the guanine in position 1207 of 16S rRNA in the 30S particle. This Stutzerimonas stutzeri (strain A1501) (Pseudomonas stutzeri) protein is Ribosomal RNA small subunit methyltransferase C.